Consider the following 298-residue polypeptide: GTP cyclohydrolase FolE2 (298 aa).

The protein belongs to the GTP cyclohydrolase IV family.

It carries out the reaction GTP + H2O = 7,8-dihydroneopterin 3'-triphosphate + formate + H(+). It participates in cofactor biosynthesis; 7,8-dihydroneopterin triphosphate biosynthesis; 7,8-dihydroneopterin triphosphate from GTP: step 1/1. In terms of biological role, converts GTP to 7,8-dihydroneopterin triphosphate. In Neisseria meningitidis serogroup C (strain 053442), this protein is GTP cyclohydrolase FolE2.